We begin with the raw amino-acid sequence, 419 residues long: Carboxypeptidase A1 (419 aa).

An N-terminal signal peptide occupies residues 1-16 (MKRLLILSLLLEAVCG). Positions 17–110 (NENFVGHQVL…KQQMSAFQAR (94 aa)) are cleaved as a propeptide — activation peptide. Residues 121 to 414 (TYHTLDEIYE…LALLTIMDHT (294 aa)) enclose the Peptidase M14 domain. Positions 179 and 182 each coordinate Zn(2+). Residues 179–182 (HSRE), R237, and 254–255 (NR) each bind substrate. The cysteines at positions 248 and 271 are disulfide-linked. H306 is a Zn(2+) binding site. Residues 307–308 (SY) and Y358 contribute to the substrate site. The Proton donor/acceptor role is filled by E380.

This sequence belongs to the peptidase M14 family. In terms of assembly, monomer. May form a complex with proelastase 2. Zn(2+) is required as a cofactor.

The protein resides in the secreted. The enzyme catalyses Release of a C-terminal amino acid, but little or no action with -Asp, -Glu, -Arg, -Lys or -Pro.. It carries out the reaction leukotriene C4 + H2O = leukotriene F4 + glycine. In terms of biological role, carboxypeptidase that catalyzes the release of a C-terminal amino acid, but has little or no action with -Asp, -Glu, -Arg, -Lys or -Pro. Catalyzes the conversion of leukotriene C4 to leukotriene F4 via the hydrolysis of an amide bond. This chain is Carboxypeptidase A1, found in Rattus norvegicus (Rat).